The sequence spans 115 residues: U3-lycotoxin-Ls1a (115 aa).

An N-terminal signal peptide occupies residues 1-20 (MKFVLLFGVFLVTLFSYSSA). Residues 21–44 (EMLDDFDQAAEDELLSLIEKEEAR) constitute a propeptide that is removed on maturation. 4 disulfide bridges follow: C48/C63, C55/C72, C62/C87, and C74/C85.

This sequence belongs to the neurotoxin 19 (CSTX) family. 01 subfamily. As to expression, expressed by the venom gland.

Its subcellular location is the secreted. The sequence is that of U3-lycotoxin-Ls1a from Lycosa singoriensis (Wolf spider).